The primary structure comprises 389 residues: RHOMBOID-like protein 1 (389 aa).

The next 7 helical transmembrane spans lie at 56–76, 136–156, 163–183, 191–211, 221–241, 244–264, and 295–315; these read PWLVPAIVVANIALFAISMFI, IWLHAGVFHVLANMLSLIFIG, FGFVRIGLLYMISGFGGSLLS, ISVGASGALFGLLGAMLSELL, FAALLTLIFIIAINLAVGILP, DNFAHLGGFTSGFLLGFVFLI, and VLWITSLVLLIAGYTAGLVVL. The active-site Nucleophile is Ser-196. His-248 (charge relay system) is an active-site residue.

The protein belongs to the peptidase S54 family. In terms of tissue distribution, expressed in roots, seedlings, leaves, stems and flowers.

The protein localises to the golgi apparatus membrane. It catalyses the reaction Cleaves type-1 transmembrane domains using a catalytic dyad composed of serine and histidine that are contributed by different transmembrane domains.. Probable rhomboid-type serine protease that catalyzes intramembrane proteolysis. Unable to cleave the Drosophila protein Spitz. This is RHOMBOID-like protein 1 from Arabidopsis thaliana (Mouse-ear cress).